Here is a 528-residue protein sequence, read N- to C-terminus: Ribonuclease Y (528 aa).

A helical membrane pass occupies residues 15 to 35; the sequence is SLLVFALICGSIIGYFLYSFF. Positions 217 to 277 constitute a KH domain; that stretch reads NISVVNIPNE…IRREIAKKTL (61 aa). Residues 343–436 form the HD domain; that stretch reads VLKHSLEVAF…VAIADTLSSA (94 aa).

Belongs to the RNase Y family.

It localises to the cell membrane. Endoribonuclease that initiates mRNA decay. In Onion yellows phytoplasma (strain OY-M), this protein is Ribonuclease Y.